Reading from the N-terminus, the 322-residue chain is Agmatinase (322 aa).

Residues H136, D160, H162, D164, D243, and D245 each coordinate Mn(2+).

The protein belongs to the arginase family. Agmatinase subfamily. The cofactor is Mn(2+).

It carries out the reaction agmatine + H2O = urea + putrescine. It participates in amine and polyamine biosynthesis; putrescine biosynthesis via agmatine pathway; putrescine from agmatine: step 1/1. Catalyzes the formation of putrescine from agmatine. The polypeptide is Agmatinase (Chromobacterium violaceum (strain ATCC 12472 / DSM 30191 / JCM 1249 / CCUG 213 / NBRC 12614 / NCIMB 9131 / NCTC 9757 / MK)).